Consider the following 490-residue polypeptide: 5'-3' exonuclease PLD3 (490 aa).

The Cytoplasmic portion of the chain corresponds to 1 to 38 (MKPKLMYQELKVPAEEPANELPMNEIEAWKAAEKKARW). Residues 39–59 (VLLVLILAVVGFGALMTQLFL) traverse the membrane as a helical; Signal-anchor for type II membrane protein segment. Residues 60 to 490 (WEYGDLHLFG…DSVGNACRLL (431 aa)) are Lumenal-facing. 2 disulfides stabilise this stretch: Cys77–Cys239 and Cys81–Cys237. 2 N-linked (GlcNAc...) asparagine glycosylation sites follow: Asn97 and Asn132. In terms of domain architecture, PLD phosphodiesterase 1 spans 196–223 (THGVLHTKFWVVDQTHFYLGSANMDWRS). Catalysis depends on residues His201, Lys203, and Asp208. His201 acts as the Proton donor in catalysis. Phosphate contacts are provided by His201 and Lys203. Asn218 is a binding site for phosphate. N-linked (GlcNAc...) asparagine glycans are attached at residues Asn236, Asn284, and Asn387. A disulfide bond links Cys366 and Cys487. A PLD phosphodiesterase 2 domain is found at 411–437 (YARVNHNKYMVTERATYIGTSNWSGNY). Residue His416 coordinates phosphate. The active-site Nucleophile is His416. Phe438 lines the Mg(2+) pocket.

This sequence belongs to the phospholipase D family. In terms of assembly, homodimer. Interacts with APP. Post-translationally, N-glycosylated. In terms of processing, proteolytically processed to a soluble active form that is stable within endosomes and lysosomes. During transport through the secretory pathway becomes proteolysed by cysteine proteases, thereby releasing a stable soluble lysosomal lumenal polypeptide, whereas the transmembrane-bound fragment is rapidly degraded. Its transport route to lysosomes involves ubiquitination and the ESCRT complex. Ubiquitinated at N-terminus. Ubiquitination mediates sorting into lysosomes. As to expression, widely expressed. In the brain, high levels of expression are detected in the frontal, temporal and occipital cortices and hippocampus. Expressed at low level in corpus callosum. Expressed in plasmacytoid dendritic cells and monocytes (at protein level).

It is found in the endoplasmic reticulum membrane. It localises to the lysosome lumen. Its subcellular location is the early endosome membrane. The protein resides in the late endosome membrane. The protein localises to the golgi apparatus membrane. It is found in the endosome membrane. It catalyses the reaction Exonucleolytic cleavage in the 5'- to 3'-direction to yield nucleoside 3'-phosphates.. The catalysed reaction is a 5'-end 5'-dephospho-ribonucleotidyl-ribonucleotide-RNA + H2O = a ribonucleoside 3'-phosphate + a 5'-end dephospho-ribonucleoside-RNA + H(+). The enzyme catalyses a ribonucleoside 3'-phosphate-2'-3'-cyclophospho-GMP + H2O = a ribonucleoside 3'-phosphate + 2',3'-cyclophospho-GMP + H(+). It carries out the reaction a 5'-end 5'-dephospho-2'-deoxyribonucleotidyl-2'-deoxyribonucleotide in single-stranded DNA + H2O = a 5'-end dephospho-2'-deoxyribonucleoside in single-stranded DNA + a 2'-deoxyribonucleoside 3'-phosphate + H(+). It catalyses the reaction a 5'-end 5'-phospho-2'-deoxyribonucleotide in single-stranded DNA + H2O = a 5'-end 5'-dephospho-2'-deoxyribonucleotide in single-stranded DNA + phosphate. The catalysed reaction is a 3-lyso-sn-glycero-1-phospho-(3'-acyl-1'-sn-glycerol) + a 1-acyl-sn-glycerol = a 3-acyl-sn-glycero-1-phospho-(3'-acyl-1'-sn-glycerol) + glycerol. The enzyme catalyses 3-lyso-sn-glycero-1-phospho-(3'-(9Z-octadecenoyl)-1'-sn-glycerol) + 1-(9Z-octadecenoyl)-sn-glycerol = 3-(9Z-octadecenoyl)-sn-glycero-1-phospho-(3'-(9Z-octadecenoyl)-1'-sn-glycerol) + glycerol. Its activity is regulated as follows. The exonuclease activity toward ssDNA substrate is Ca(2+) and Mg(2+)-independent, but it is inhibited by Fe(2+), Cu(2+) and to a lesser extent Zn(2+) ions. 5'-&gt;3' exonuclease that hydrolyzes the phosphodiester bond of single-stranded DNA (ssDNA) and RNA molecules to form nucleoside 3'-monophosphates and 5'-end 5'-hydroxy deoxyribonucleotide/ribonucleotide fragments. Partially redundant with PLD4, can cleave all four nucleotides displaying higher efficiency for ssDNA and RNA fragments initiated with uridine and guanosine residues and lower efficiency for cytidine-initiated substrates. As a result, it does not always degrade polynucleotides to the single nucleotide level, it can stall at specific sites sparing certain fragments from exonucleolytic degradation. Processes self and pathogenic ssDNA and RNA molecules that reach the endolysosomal compartment via phagocytosis or autophagy and may serve as 'danger' signals for recognition by innate immune receptors such as toll-like receptors (TLRs). Degrades mitochondrial CpG-rich ssDNA fragments to prevent TLR9 activation and autoinflammatory response, but it can cleave viral RNA to generate ligands for TLR7 activation and initiate antiviral immune responses. In plasmacytoid dendritic cells, it cooperates with endonuclease RNASET2 to release 2',3'-cyclic guanosine monophosphate (2',3'-cGMP), a potent stimulatory ligand for TLR7. Produces 2',3'-cGMPs and cytidine-rich RNA fragments that occupy TLR7 ligand-binding pockets and trigger a signaling-competent state. Can exert polynucleotide phosphatase activity toward 5'-phosphorylated ssDNA substrates although at a slow rate. Transphosphatidylase that catalyzes the exchange with R to S stereo-inversion of the glycerol moiety between (S,R)-lysophosphatidylglycerol (LPG) and monoacylglycerol (MAG) substrates to yield (S,S)-bis(monoacylglycero)phosphate (BMP). Can synthesize a variety of (S,S)-BMPs representing the main phospholipid constituent of lysosomal intralumenal vesicle (ILV) membranes that bind acid hydrolases for lipid degradation. Regulates the homeostasis and interorganellar communication of the endolysosomal system with an overall impact on cellular removal of dysfunctional organelles via autophagy as well as proper protein and lipid turnover. May play a role in myotube formation in response to ER stress. In Homo sapiens (Human), this protein is 5'-3' exonuclease PLD3.